Consider the following 237-residue polypeptide: Sugar fermentation stimulation protein homolog (237 aa).

This sequence belongs to the SfsA family.

The protein is Sugar fermentation stimulation protein homolog of Pseudomonas syringae pv. syringae (strain B728a).